Here is a 595-residue protein sequence, read N- to C-terminus: Alpha-1,3-galactosidase B (595 aa).

The first 22 residues, 1-22 (MKTILLFALSLLLSLSVSDVCA), serve as a signal peptide directing secretion. PbH1 repeat units follow at residues 432–454 (TPEV…LFST), 455–477 (PKKT…LLCG), and 488–541 (CRDV…VIED).

Belongs to the glycosyl hydrolase 110 family. B subfamily.

The enzyme catalyses Hydrolysis of terminal, non-reducing branched (1-&gt;3)-alpha-D-galactosidic residues, producing free D-galactose.. The catalysed reaction is Hydrolysis of terminal, non-reducing linear (1-&gt;3)-alpha-D-galactosidic residues, producing free D-galactose.. It catalyses the reaction Hydrolysis of terminal, non-reducing alpha-D-galactose residues in alpha-D-galactosides, including galactose oligosaccharides, galactomannans and galactolipids.. In terms of biological role, alpha-galactosidase. Removes both branched alpha-1,3-linked galactose residues of blood group B antigens and linear alpha-1,3-linked galactose structures. This Bacteroides fragilis (strain YCH46) protein is Alpha-1,3-galactosidase B (glaB).